The chain runs to 264 residues: Thymidylate synthase (264 aa).

R21 is a binding site for dUMP. Residue H51 coordinates (6R)-5,10-methylene-5,6,7,8-tetrahydrofolate. 126–127 lines the dUMP pocket; that stretch reads RR. C146 (nucleophile) is an active-site residue. Residues 166–169, N177, and 207–209 contribute to the dUMP site; these read RSCD and HLY. D169 lines the (6R)-5,10-methylene-5,6,7,8-tetrahydrofolate pocket. (6R)-5,10-methylene-5,6,7,8-tetrahydrofolate is bound at residue A263.

Belongs to the thymidylate synthase family. Bacterial-type ThyA subfamily. In terms of assembly, homodimer.

It localises to the cytoplasm. It catalyses the reaction dUMP + (6R)-5,10-methylene-5,6,7,8-tetrahydrofolate = 7,8-dihydrofolate + dTMP. It functions in the pathway pyrimidine metabolism; dTTP biosynthesis. Catalyzes the reductive methylation of 2'-deoxyuridine-5'-monophosphate (dUMP) to 2'-deoxythymidine-5'-monophosphate (dTMP) while utilizing 5,10-methylenetetrahydrofolate (mTHF) as the methyl donor and reductant in the reaction, yielding dihydrofolate (DHF) as a by-product. This enzymatic reaction provides an intracellular de novo source of dTMP, an essential precursor for DNA biosynthesis. The chain is Thymidylate synthase from Photorhabdus laumondii subsp. laumondii (strain DSM 15139 / CIP 105565 / TT01) (Photorhabdus luminescens subsp. laumondii).